Reading from the N-terminus, the 294-residue chain is Beta-lactamase (294 aa).

The N-terminal stretch at 1–30 is a signal peptide; the sequence is MKHSSLRRSLLLAGITLPLVSFALPAWANA. The active-site Acyl-ester intermediate is the serine 75. Substrate is bound at residue 239 to 241; that stretch reads KTG.

Belongs to the class-A beta-lactamase family.

The enzyme catalyses a beta-lactam + H2O = a substituted beta-amino acid. This is Beta-lactamase (blaA) from Yersinia enterocolitica.